The sequence spans 274 residues: Exosome complex component Rrp42 (274 aa).

It belongs to the RNase PH family. Rrp42 subfamily. As to quaternary structure, component of the archaeal exosome complex. Forms a hexameric ring-like arrangement composed of 3 Rrp41-Rrp42 heterodimers. The hexameric ring associates with a trimer of Rrp4 and/or Csl4 subunits.

The protein localises to the cytoplasm. In terms of biological role, non-catalytic component of the exosome, which is a complex involved in RNA degradation. Contributes to the structuring of the Rrp41 active site. The chain is Exosome complex component Rrp42 from Pyrococcus abyssi (strain GE5 / Orsay).